Reading from the N-terminus, the 396-residue chain is Elongation factor Tu (396 aa).

Residues 10-206 (KPHVNVGTIG…ALDTYIPTPE (197 aa)) enclose the tr-type G domain. Residues 19–26 (GHVDHGKT) form a G1 region. 19 to 26 (GHVDHGKT) lines the GTP pocket. Thr26 serves as a coordination point for Mg(2+). A G2 region spans residues 60–64 (GITIN). The G3 stretch occupies residues 81 to 84 (DCPG). GTP is bound by residues 81–85 (DCPGH) and 136–139 (NKCD). The segment at 136-139 (NKCD) is G4. Positions 174-176 (SAK) are G5.

It belongs to the TRAFAC class translation factor GTPase superfamily. Classic translation factor GTPase family. EF-Tu/EF-1A subfamily. Monomer.

The protein localises to the cytoplasm. The enzyme catalyses GTP + H2O = GDP + phosphate + H(+). Functionally, GTP hydrolase that promotes the GTP-dependent binding of aminoacyl-tRNA to the A-site of ribosomes during protein biosynthesis. The sequence is that of Elongation factor Tu from Burkholderia cenocepacia (strain HI2424).